Here is a 307-residue protein sequence, read N- to C-terminus: Tyrosine recombinase XerC (307 aa).

A Core-binding (CB) domain is found at 6 to 89 (HNTLQTVNTF…TLRTFFRYLM (84 aa)). The Tyr recombinase domain occupies 110–293 (RLPKALDVDQ…DFQHLAQVYD (184 aa)). Active-site residues include Arg151, Lys175, His245, Arg248, and His271. The active-site O-(3'-phospho-DNA)-tyrosine intermediate is the Tyr280.

This sequence belongs to the 'phage' integrase family. XerC subfamily. In terms of assembly, forms a cyclic heterotetrameric complex composed of two molecules of XerC and two molecules of XerD.

Its subcellular location is the cytoplasm. Functionally, site-specific tyrosine recombinase, which acts by catalyzing the cutting and rejoining of the recombining DNA molecules. The XerC-XerD complex is essential to convert dimers of the bacterial chromosome into monomers to permit their segregation at cell division. It also contributes to the segregational stability of plasmids. The chain is Tyrosine recombinase XerC from Alcanivorax borkumensis (strain ATCC 700651 / DSM 11573 / NCIMB 13689 / SK2).